A 138-amino-acid polypeptide reads, in one-letter code: Putative nickel-responsive regulator (138 aa).

Ni(2+)-binding residues include His-78, His-89, His-91, and Cys-97.

This sequence belongs to the transcriptional regulatory CopG/NikR family. The cofactor is Ni(2+).

In terms of biological role, transcriptional regulator. The sequence is that of Putative nickel-responsive regulator from Pyrococcus horikoshii (strain ATCC 700860 / DSM 12428 / JCM 9974 / NBRC 100139 / OT-3).